A 568-amino-acid polypeptide reads, in one-letter code: MASIIQALPTEVVYLITAGEVIDSLASVVRELVENSLDAGATRIVVSLWPQQWRIRVADNGCGMNLDDLQQAATAHSTSKIRSSADLWKINSLGFRGEALHSLTTLADLEILSRPVDGKLGWRISYGNGGKVVQVEVTAIAPGTVVTVSNLFGNCSSRRQGLPTTAQQMKAVQATIYQIALCHPHVTWQIWQNDRQWFTISPARTTGQLLPQILPQVRQGDLQEVKLEIPNPPHSPLPCTNAIHRVSPHSALTLVVGLPDRCHRHRPDWVRVAINGRMVKTPELEQTILSAFHRTLPRDRYPICFLHLAISPDQINWNRNPAKTEIYLNEIIYWQEQITQAINQALSISSSNLKEAVHTTRVSKLLKAAEAKGGYNFNPQNPKEDRKNPNSLKAVAQVSNTYIVAEHPGGMWLVEQHIAHERVLYEQLCDDWQLVPVEPPIILYQLSLAQVSQLQRIGLDIESFGEQLWAVRNIPAPLQQRDDCAEAILELSWGGDLQTAQVAVACRSAIRNGTPMNQQEMQTLLDNWQRTRNPRTCPHGRPIYLSLEESALARFFRRNWVIGKSHGI.

This sequence belongs to the DNA mismatch repair MutL/HexB family.

In terms of biological role, this protein is involved in the repair of mismatches in DNA. It is required for dam-dependent methyl-directed DNA mismatch repair. May act as a 'molecular matchmaker', a protein that promotes the formation of a stable complex between two or more DNA-binding proteins in an ATP-dependent manner without itself being part of a final effector complex. The polypeptide is DNA mismatch repair protein MutL (Nostoc punctiforme (strain ATCC 29133 / PCC 73102)).